Consider the following 66-residue polypeptide: Large ribosomal subunit protein uL29 (66 aa).

The protein belongs to the universal ribosomal protein uL29 family.

In Helicobacter pylori (strain J99 / ATCC 700824) (Campylobacter pylori J99), this protein is Large ribosomal subunit protein uL29 (rpmC).